The following is an 885-amino-acid chain: DNA mismatch repair protein MutS (885 aa).

640 to 647 lines the ATP pocket; sequence GPNMGGKS.

This sequence belongs to the DNA mismatch repair MutS family.

Its function is as follows. This protein is involved in the repair of mismatches in DNA. It is possible that it carries out the mismatch recognition step. This protein has a weak ATPase activity. This is DNA mismatch repair protein MutS from Variovorax paradoxus (strain S110).